The following is a 142-amino-acid chain: Nucleoside diphosphate kinase (142 aa).

Residues Lys11, Phe59, Arg87, Thr93, Arg104, and Asn114 each contribute to the ATP site. The active-site Pros-phosphohistidine intermediate is His117.

The protein belongs to the NDK family. Homotetramer. Mg(2+) is required as a cofactor.

It is found in the cytoplasm. The catalysed reaction is a 2'-deoxyribonucleoside 5'-diphosphate + ATP = a 2'-deoxyribonucleoside 5'-triphosphate + ADP. It carries out the reaction a ribonucleoside 5'-diphosphate + ATP = a ribonucleoside 5'-triphosphate + ADP. Its function is as follows. Major role in the synthesis of nucleoside triphosphates other than ATP. The ATP gamma phosphate is transferred to the NDP beta phosphate via a ping-pong mechanism, using a phosphorylated active-site intermediate. This chain is Nucleoside diphosphate kinase, found in Photobacterium profundum (strain SS9).